The chain runs to 391 residues: Ferrochelatase (391 aa).

The Fe cation site is built by H196 and E281.

Belongs to the ferrochelatase family.

It localises to the cytoplasm. The enzyme catalyses heme b + 2 H(+) = protoporphyrin IX + Fe(2+). It participates in porphyrin-containing compound metabolism; protoheme biosynthesis; protoheme from protoporphyrin-IX: step 1/1. Its function is as follows. Catalyzes the ferrous insertion into protoporphyrin IX. The chain is Ferrochelatase from Prochlorococcus marinus (strain SARG / CCMP1375 / SS120).